The following is a 1772-amino-acid chain: Gag-Pro-Pol polyprotein (1772 aa).

The N-myristoyl glycine; by host moiety is linked to residue G2. A propeptide spanning residues 101–162 is cleaved from the precursor; that stretch reads AAVAQTEEIL…TKKPKRFPVL (62 aa). The segment covering 113-126 has biased composition (polar residues); that stretch reads SSHTELTTKPSQNP. The segment at 113–149 is disordered; it reads SSHTELTTKPSQNPDLDLISLDSDDEGAKGSSLKDKN. Residues 138-149 are compositionally biased toward basic and acidic residues; that stretch reads EGAKGSSLKDKN. Residues 203-206 carry the PPXY motif motif; sequence PPPY. Positions 211 to 214 match the PTAP/PSAP motif motif; it reads PSAP. Residues 217-258 adopt a coiled-coil conformation; it reads MAVVNPKEELKEKIAQLEEQIKLEELHQALISKLQKLKTGNE. The segment at 258–282 is disordered; it reads ETVTSPETAGGFSRTPHWPGQHIPK. A CCHC-type zinc finger spans residues 548–565; it reads GCCFKCGRKGHFAKNCHE. The disordered stretch occupies residues 593–626; that stretch reads KSKTDSQGNPLPPHQGNRTEGPAPGPETSLWGGQ. The 77-residue stretch at 781 to 857 folds into the Peptidase A2 domain; sequence FTGLIDTGAD…LPVNLWGRDL (77 aa). Residue D786 is the Protease; shared with dimeric partner of the active site. Residues 868–914 enclose the G-patch domain; it reads PSDIVTAQMLAQGYSPGKGLGKNENGILHPIPNQGQFDKKGFGNFLT. The Reverse transcriptase domain maps to 960 to 1148; it reads LEAGHITESN…DPYTYLGFEL (189 aa). Positions 1025, 1100, 1101, 1371, 1400, 1421, and 1485 each coordinate Mg(2+). In terms of domain architecture, RNase H type-1 spans 1362 to 1493; the sequence is LNNALLVFTD…ADLATKTVAS (132 aa). The Integrase-type zinc finger occupies 1497–1538; that stretch reads TNLESAQNAHTLHHLNAQTLKLMFNIPREQARQIVRQCPICA. H1506, H1510, C1534, and C1537 together coordinate Zn(2+). The 170-residue stretch at 1551–1720 folds into the Integrase catalytic domain; it reads RGLLPNMIWQ…NPRKQFAMVK (170 aa). Mg(2+) contacts are provided by D1562, D1619, and E1655. Positions 1717–1766 form a DNA-binding region, integrase-type; sequence AMVKWKDPLDNTWPWPDPVIIWGRGSVCVYSQTHDAARWLPERLVKQIPN.

This sequence belongs to the retroviral Pol polyprotein family. As to quaternary structure, homodimer. In terms of assembly, interacts with the G-patch peptide. Interacts with the reverse transcriptase/ribonuclease H. As to quaternary structure, homotrimer. The cofactor is Mg(2+). In terms of processing, released by autocatalytic processing. The protease can undergo further autoprocessing to yield 2 shorter but enzymatically active forms of 12 kDa and 13 kDa. Post-translationally, myristoylated. Myristoylation of the matrix (MA) domain mediates the transport and binding of Gag polyproteins to the host plasma membrane and is required for the assembly of viral particles. Specific enzymatic cleavages in vivo yield mature proteins.

It is found in the virion. It catalyses the reaction DNA(n) + a 2'-deoxyribonucleoside 5'-triphosphate = DNA(n+1) + diphosphate. The enzyme catalyses Endonucleolytic cleavage to 5'-phosphomonoester.. It carries out the reaction dUTP + H2O = dUMP + diphosphate + H(+). Its function is as follows. Matrix protein. In terms of biological role, nucleocapsid protein p14: Nucleocapsid protein. Functionally, capsid protein. The aspartyl protease mediates proteolytic cleavages of Gag and Gag-Pol polyproteins during or shortly after the release of the virion from the plasma membrane. Cleavages take place as an ordered, step-wise cascade to yield mature proteins. This process is called maturation. Displays maximal activity during the budding process just prior to particle release from the cell. Its function is as follows. Enhances the activity of the reverse transcriptase. May be part of the mature RT. In terms of biological role, RT is a multifunctional enzyme that converts the viral dimeric RNA genome into dsDNA in the cytoplasm, shortly after virus entry into the cell. This enzyme displays a DNA polymerase activity that can copy either DNA or RNA templates, and a ribonuclease H (RNase H) activity that cleaves the RNA strand of RNA-DNA heteroduplexes in a partially processive 3' to 5' endonucleasic mode. Conversion of viral genomic RNA into dsDNA requires many steps. A tRNA binds to the primer-binding site (PBS) situated at the 5' end of the viral RNA. RT uses the 3' end of the tRNA primer to perfom a short round of RNA-dependent minus-strand DNA synthesis. The reading proceeds through the U5 region and ends after the repeated (R) region which is present at both ends of viral RNA. The portion of the RNA-DNA heteroduplex is digested by the RNase H, resulting in a ssDNA product attached to the tRNA primer. This ssDNA/tRNA hybridizes with the identical R region situated at the 3' end of viral RNA. This template exchange, known as minus-strand DNA strong stop transfer, can be either intra- or intermolecular. RT uses the 3' end of this newly synthesized short ssDNA to perfom the RNA-dependent minus-strand DNA synthesis of the whole template. RNase H digests the RNA template except for a polypurine tract (PPT) situated at the 5' end of the genome. It is not clear if both polymerase and RNase H activities are simultaneous. RNase H probably can proceed both in a polymerase-dependent (RNA cut into small fragments by the same RT performing DNA synthesis) and a polymerase-independent mode (cleavage of remaining RNA fragments by free RTs). Secondly, RT performs DNA-directed plus-strand DNA synthesis using the PPT that has not been removed by RNase H as primers. PPT and tRNA primers are then removed by RNase H. The 3' and 5' ssDNA PBS regions hybridize to form a circular dsDNA intermediate. Strand displacement synthesis by RT to the PBS and PPT ends produces a blunt ended, linear dsDNA copy of the viral genome that includes long terminal repeats (LTRs) at both ends. Functionally, catalyzes viral DNA integration into the host chromosome, by performing a series of DNA cutting and joining reactions. This chain is Gag-Pro-Pol polyprotein (pol), found in Macaca mulatta (Rhesus macaque).